The sequence spans 886 residues: MDKNFYKNSLNIFNSNFSMKANLSEKDKFYADFWEKNQIYQQILRKRRGNPRFILHDGPPYANGDIHIGHALNKILKDIIVRYKTMAGFYSPFVPGWDTHGLPIENKIINQIGSKSTLEIRRKSNDFANSQILAQMAQFKKLNLLTDFKQIYQTNTPNYEAKQLKLFKKMVSRGLVYRALKPVYWSPSSQSALAEAEIEYLEYRSPSLFTSFDIKKGNNFVAENDKLIIWTTTPWTLIANSGVAVGENFDYVRIKNEENFYVLAANLLEKLAAIFDWKHYEIIDNFPGKSILGIKYLHPIFEKICPIVSGNHVSLDVGSGLVHLAPLFGEDDYWIGRENNLEMVMHVNDDGKFNENAGQFSGQFYANSNKLITEFLEKKSKILHLSFIDHSFPHDWRTLKPVIYRGTPQWFVSIEKIKKDLEKAIEEIEFPENWLKKRLTKMVVERKDWLISRQRSWGIPLIIFYDQNKEPVLDKPEIFDYIISLVEKFGSRIWYEKTTDELLPEKYQNLGWTKENDILDVWFDSGVSFFAANISDEKPPFDIYFEGSDQYRGWFNSSLINSVIYFGFSPYKKLLSHGFVVDAKGNKMSKSRGNGVDPLVILSKYGCDIFRLWVANSEYYNDIVYSEAIFEQNVEIYRKIRNTVRFLITNLADFKPKKYELTEVDLYIFNKIQKLKNEIIQNYDQNRFVRVVKIINNFIIEFSNFYLSIVKDILYADKKESLKRRQVQYNLYELLQVLNIAIAPIMPTTAEEIYSFIQKNNKQISVHMEEFFKESHFDEELVAKWDEFFQIKDSVYQLIEQKIKSKEIKRPNEVGVLLKTDSDFIKSIDLEKLLMVAKVEFSNEKTEILQLNWEKCPRCWNHFEKINKVCARCFEVLSEIVPEKNS.

The short motif at 60–70 (PYANGDIHIGH) is the 'HIGH' region element. Glu546 is a binding site for L-isoleucyl-5'-AMP. A 'KMSKS' region motif is present at residues 587 to 591 (KMSKS). Lys590 is a binding site for ATP. Zn(2+) is bound by residues Cys856, Cys859, Cys870, and Cys873.

The protein belongs to the class-I aminoacyl-tRNA synthetase family. IleS type 1 subfamily. As to quaternary structure, monomer. It depends on Zn(2+) as a cofactor.

The protein resides in the cytoplasm. It catalyses the reaction tRNA(Ile) + L-isoleucine + ATP = L-isoleucyl-tRNA(Ile) + AMP + diphosphate. Its function is as follows. Catalyzes the attachment of isoleucine to tRNA(Ile). As IleRS can inadvertently accommodate and process structurally similar amino acids such as valine, to avoid such errors it has two additional distinct tRNA(Ile)-dependent editing activities. One activity is designated as 'pretransfer' editing and involves the hydrolysis of activated Val-AMP. The other activity is designated 'posttransfer' editing and involves deacylation of mischarged Val-tRNA(Ile). The chain is Isoleucine--tRNA ligase from Mesomycoplasma hyopneumoniae (strain 7448) (Mycoplasma hyopneumoniae).